Here is a 435-residue protein sequence, read N- to C-terminus: Proline--tRNA ligase (435 aa).

The protein belongs to the class-II aminoacyl-tRNA synthetase family. ProS type 2 subfamily. In terms of assembly, homodimer.

It localises to the cytoplasm. It carries out the reaction tRNA(Pro) + L-proline + ATP = L-prolyl-tRNA(Pro) + AMP + diphosphate. Catalyzes the attachment of proline to tRNA(Pro) in a two-step reaction: proline is first activated by ATP to form Pro-AMP and then transferred to the acceptor end of tRNA(Pro). The chain is Proline--tRNA ligase (proS) from Sulfurimonas denitrificans (strain ATCC 33889 / DSM 1251) (Thiomicrospira denitrificans (strain ATCC 33889 / DSM 1251)).